The following is a 504-amino-acid chain: Signal recognition particle receptor FtsY (504 aa).

2 disordered regions span residues 1-71 (MFNW…DDYL) and 116-135 (ESDQ…TEIT). GTP contacts are provided by residues 308-315 (GVNGAGKT), 391-395 (DTAGR), and 455-458 (TKLD).

This sequence belongs to the GTP-binding SRP family. FtsY subfamily. In terms of assembly, part of the signal recognition particle protein translocation system, which is composed of SRP and FtsY.

The protein localises to the cell inner membrane. It localises to the cytoplasm. The enzyme catalyses GTP + H2O = GDP + phosphate + H(+). Functionally, involved in targeting and insertion of nascent membrane proteins into the cytoplasmic membrane. Acts as a receptor for the complex formed by the signal recognition particle (SRP) and the ribosome-nascent chain (RNC). In Synechocystis sp. (strain ATCC 27184 / PCC 6803 / Kazusa), this protein is Signal recognition particle receptor FtsY.